Consider the following 697-residue polypeptide: Elongation factor G (697 aa).

The tr-type G domain occupies 8–283; the sequence is ERMRNIGIAA…AVVDYLPSPL (276 aa). Residues 17–24, 81–85, and 135–138 each bind GTP; these read AHIDAGKT, DTPGH, and NKMD.

It belongs to the TRAFAC class translation factor GTPase superfamily. Classic translation factor GTPase family. EF-G/EF-2 subfamily.

The protein localises to the cytoplasm. In terms of biological role, catalyzes the GTP-dependent ribosomal translocation step during translation elongation. During this step, the ribosome changes from the pre-translocational (PRE) to the post-translocational (POST) state as the newly formed A-site-bound peptidyl-tRNA and P-site-bound deacylated tRNA move to the P and E sites, respectively. Catalyzes the coordinated movement of the two tRNA molecules, the mRNA and conformational changes in the ribosome. The chain is Elongation factor G from Solibacter usitatus (strain Ellin6076).